The sequence spans 1008 residues: Collagen, type I, alpha 1a (1008 aa).

The segment covering 1–21 (SPAMPVPGPMGPMGPRGPPGS) has biased composition (pro residues). Positions 1–920 (SPAMPVPGPM…PQEKAPDPFR (920 aa)) are disordered. Residues 39–53 (NGEDGESGKPGRGGE) show a composition bias toward basic and acidic residues. Residues 92-117 (TPGAMGPRGAAGAAGARGNDGAAGAA) are compositionally biased toward low complexity. The segment covering 119-132 (PPGPTGPAGPPGFP) has biased composition (pro residues). Residues 133–151 (GGPGAKGDAGAQGGRGPEG) are compositionally biased toward gly residues. 2 stretches are compositionally biased toward low complexity: residues 152–195 (PAGA…AGAP) and 204–230 (SGPQ…APGV). Gly residues predominate over residues 253–265 (GARGGPGGRGFPG). Composition is skewed to low complexity over residues 339–354 (VGAR…PGPK) and 410–422 (LPGE…PAGA). Positions 423 to 435 (RGDRGFPGERGAK) are enriched in basic and acidic residues. Composition is skewed to low complexity over residues 437–456 (DAGA…QGMP), 489–524 (RGLT…ARGA), and 537–573 (AGFA…AGPT). Over residues 604-617 (PPGPSGNPGPPGPA) the composition is skewed to pro residues. Positions 634-661 (PAGRPGELGAAGPPGPAGEKGSPGSEGA) are enriched in low complexity. Residues 696 to 709 (GEAGGPSGPGGERG) are compositionally biased toward gly residues. The segment covering 717 to 735 (PGLAGAPGEPGREGSPGNE) has biased composition (low complexity). Residues 761–771 (APGPPGAPGPV) are compositionally biased toward pro residues. Positions 785-806 (PAGPAGSAGPSGPRGPAGAPGL) are enriched in low complexity. Residues 807-821 (RGDKGESGEAGERRG) show a composition bias toward basic and acidic residues. Low complexity predominate over residues 832 to 868 (SGSSGEQGPAGAAGPAGPRGPAGSAGSPGKDGMSGLP). A compositionally biased stretch (pro residues) spans 884–896 (AGPPGPPGPPGAP). Positions 978 to 1008 (TSRLPLLDLAPMDVGAPDQEFGLEVGPVCFL) constitute a Fibrillar collagen NC1 domain.

This sequence belongs to the fibrillar collagen family.

It localises to the secreted. Its subcellular location is the extracellular space. The protein localises to the extracellular matrix. This chain is Collagen, type I, alpha 1a, found in Epinephelus aeneus (White grouper).